Here is a 111-residue protein sequence, read N- to C-terminus: Notch-regulated ankyrin repeat-containing protein B (111 aa).

ANK repeat units follow at residues 47–76 (EGQTALHQSVIDGNLELVKLLVKFGADTRL) and 80–109 (DGWSALHIAAFGGHQDIVLYLITRAKYSSS).

This sequence belongs to the NRARP family.

Functionally, regulates independently canonical Wnt and Notch signaling by modulating LEF1 and Notch protein turnover. Stabilizes LEF1, a pivotal transcription factor in the Wnt signaling cascade, by blocking its ubiquitination. Involved in angiogenesis; involved in intersegmental vessel patterning during development. This is Notch-regulated ankyrin repeat-containing protein B (nrarpb) from Danio rerio (Zebrafish).